A 271-amino-acid chain; its full sequence is Troponin T, fast skeletal muscle (271 aa).

The segment covering 1–21 (MSDEEVEHVEEEYEEEEEAQE) has biased composition (acidic residues). The tract at residues 1-74 (MSDEEVEHVE…EKVDFDDIQK (74 aa)) is disordered. The residue at position 2 (Ser-2) is an N-acetylserine. Residue Ser-2 is modified to Phosphoserine. Composition is skewed to basic and acidic residues over residues 29 to 53 (EVHE…EKPR) and 62 to 74 (PEGE…DIQK). Ser-90 carries the post-translational modification Phosphoserine. Residues 113 to 155 (RAERAEQQRIRAEKERERQNRLAEEKARREEEEAKRRAEDDLK) show a composition bias toward basic and acidic residues. The segment at 113-192 (RAERAEQQRI…TAREMKKKVL (80 aa)) is disordered. A phosphoserine mark is found at Ser-161, Ser-168, and Ser-169. Basic and acidic residues predominate over residues 183–192 (TAREMKKKVL). Ser-205 carries the post-translational modification Phosphoserine. Tyr-221 carries the post-translational modification Phosphotyrosine. The interval 249–271 (DQAQKHSKKAGTTPKGKVGGRWK) is disordered.

Belongs to the troponin T family.

In terms of biological role, troponin T is the tropomyosin-binding subunit of troponin, the thin filament regulatory complex which confers calcium-sensitivity to striated muscle actomyosin ATPase activity. The chain is Troponin T, fast skeletal muscle (TNNT3) from Sus scrofa (Pig).